Consider the following 430-residue polypeptide: Zinc carboxypeptidase A 1 (430 aa).

Residues M1–A22 form the signal peptide. The Peptidase M14 domain maps to Q124–V423. 2 residues coordinate Zn(2+): H187 and E190. C252 and C275 are oxidised to a cystine. H311 contacts Zn(2+). The active-site Proton donor/acceptor is the E386.

It belongs to the peptidase M14 family. Zn(2+) serves as cofactor.

The protein resides in the secreted. The sequence is that of Zinc carboxypeptidase A 1 from Drosophila melanogaster (Fruit fly).